Here is a 427-residue protein sequence, read N- to C-terminus: Probable G-protein coupled receptor 150 (427 aa).

Over M1–D3 the chain is Extracellular. Residues P4–W24 form a helical membrane-spanning segment. Topologically, residues S25–R50 are cytoplasmic. The chain crosses the membrane as a helical span at residues I51 to L71. Over C72–K89 the chain is Extracellular. The helical transmembrane segment at M90–L110 threads the bilayer. Over S111 to R170 the chain is Cytoplasmic. A helical membrane pass occupies residues A171 to V191. At R192–A230 the chain is on the extracellular side. A helical transmembrane segment spans residues I231–V251. Topologically, residues W252–S286 are cytoplasmic. Residues L287 to A307 form a helical membrane-spanning segment. Residues R308–V327 lie on the Extracellular side of the membrane. The chain crosses the membrane as a helical span at residues A328–F348. Topologically, residues Q349–F427 are cytoplasmic. Positions E402–F427 are disordered. The span at R410 to C421 shows a compositional bias: pro residues.

Belongs to the G-protein coupled receptor 1 family.

It localises to the cell membrane. Its function is as follows. Orphan receptor. This Mus musculus (Mouse) protein is Probable G-protein coupled receptor 150 (Gpr150).